A 132-amino-acid polypeptide reads, in one-letter code: VEAFLGSWKLQKSHNFDEYMKNLDVSLAQRKVATTVKPKTIISLDGDVITIKTESTFKSTNIQFKLAEEFDETTADNRTTKTTVKLENGKLVQTQRWDGKETTLVRELQDGKLILTCTMGDVVCTREYVREQ.

Val-1 carries the N-acetylvaline modification. A Phosphotyrosine; by Tyr-kinases modification is found at Tyr-19.

It belongs to the calycin superfamily. Fatty-acid binding protein (FABP) family.

It localises to the cytoplasm. FABPs are thought to play a role in the intracellular transport of long-chain fatty acids and their acyl-CoA esters. The chain is Fatty acid-binding protein, liver from Ginglymostoma cirratum (Nurse shark).